A 506-amino-acid polypeptide reads, in one-letter code: Bifunctional purine biosynthesis protein PurH (506 aa).

In terms of domain architecture, MGS-like spans 1 to 146 (MARLALLSVS…KNFAHLTVLC (146 aa)).

The protein belongs to the PurH family.

The catalysed reaction is (6R)-10-formyltetrahydrofolate + 5-amino-1-(5-phospho-beta-D-ribosyl)imidazole-4-carboxamide = 5-formamido-1-(5-phospho-D-ribosyl)imidazole-4-carboxamide + (6S)-5,6,7,8-tetrahydrofolate. It carries out the reaction IMP + H2O = 5-formamido-1-(5-phospho-D-ribosyl)imidazole-4-carboxamide. It functions in the pathway purine metabolism; IMP biosynthesis via de novo pathway; 5-formamido-1-(5-phospho-D-ribosyl)imidazole-4-carboxamide from 5-amino-1-(5-phospho-D-ribosyl)imidazole-4-carboxamide (10-formyl THF route): step 1/1. Its pathway is purine metabolism; IMP biosynthesis via de novo pathway; IMP from 5-formamido-1-(5-phospho-D-ribosyl)imidazole-4-carboxamide: step 1/1. The sequence is that of Bifunctional purine biosynthesis protein PurH from Trichormus variabilis (strain ATCC 29413 / PCC 7937) (Anabaena variabilis).